Here is a 399-residue protein sequence, read N- to C-terminus: Elongation factor Tu (399 aa).

Positions 10–204 constitute a tr-type G domain; it reads KPHVNIGTIG…SVDESIPEPE (195 aa). The interval 19 to 26 is G1; the sequence is GHVDHGKT. 19–26 is a GTP binding site; sequence GHVDHGKT. Threonine 26 contributes to the Mg(2+) binding site. The interval 60 to 64 is G2; sequence GITIN. Positions 81-84 are G3; that stretch reads DCPG. GTP is bound by residues 81–85 and 136–139; these read DCPGH and NKCD. Residues 136–139 are G4; it reads NKCD. Residues 174 to 176 form a G5 region; the sequence is SAL.

It belongs to the TRAFAC class translation factor GTPase superfamily. Classic translation factor GTPase family. EF-Tu/EF-1A subfamily. As to quaternary structure, monomer.

The protein resides in the cytoplasm. It catalyses the reaction GTP + H2O = GDP + phosphate + H(+). In terms of biological role, GTP hydrolase that promotes the GTP-dependent binding of aminoacyl-tRNA to the A-site of ribosomes during protein biosynthesis. The sequence is that of Elongation factor Tu from Prochlorococcus marinus (strain MIT 9211).